Here is a 212-residue protein sequence, read N- to C-terminus: Transcriptional repressor CcpN (212 aa).

Residues 6–70 enclose the HTH deoR-type domain; that stretch reads LNKRQEHILQ…FYTGKTGTQL (65 aa). A DNA-binding region (H-T-H motif) is located at residues 23 to 42; the sequence is ITGEHIAEKLNLTRATLRPD. CBS domains are found at residues 83 to 139 and 148 to 211; these read FQSI…QQEL and MTRM…ENEI.

In terms of biological role, transcription repressor that binds to the promoter of gapB and pckA genes, preventing their expression. Acts as a regulator for catabolite repression of gluconeogenic genes. The sequence is that of Transcriptional repressor CcpN (ccpN) from Bacillus subtilis (strain 168).